Consider the following 422-residue polypeptide: WD repeat and SOCS box-containing protein 1 (422 aa).

WD repeat units lie at residues 124–165 (SRCV…LLLN), 168–208 (DHTE…NMMK), 212–251 (GHQN…MIRK), 254–293 (GHYN…ILFE), and 309–346 (DNGR…SYPV). An SOCS box domain is found at 374–422 (NAYFWSTPKYVSSLQHLCRMAIRRVMNTNEVKKLPIPQKIMEFLTYQTM).

Component of a probable ECS E3 ubiquitin-protein ligase complex that contains the Elongin BC complex.

It participates in protein modification; protein ubiquitination. Its function is as follows. Probable substrate-recognition component of a SCF-like ECS (Elongin-Cullin-SOCS-box protein) E3 ubiquitin-protein ligase complex which mediates the ubiquitination and subsequent proteasomal degradation of target proteins. This is WD repeat and SOCS box-containing protein 1 (wsb1) from Xenopus tropicalis (Western clawed frog).